Consider the following 267-residue polypeptide: Dihydropteroate synthase (267 aa).

Residues 1-251 (MTKTKIMGIL…NVELNAKLAK (251 aa)) form the Pterin-binding domain. Asn11 provides a ligand contact to Mg(2+). Residues Thr51, Asp84, Asn103, Asp167, Lys203, and 239–241 (RVH) contribute to the (7,8-dihydropterin-6-yl)methyl diphosphate site.

Belongs to the DHPS family. Homodimer. The cofactor is Mg(2+).

It carries out the reaction (7,8-dihydropterin-6-yl)methyl diphosphate + 4-aminobenzoate = 7,8-dihydropteroate + diphosphate. It participates in cofactor biosynthesis; tetrahydrofolate biosynthesis; 7,8-dihydrofolate from 2-amino-4-hydroxy-6-hydroxymethyl-7,8-dihydropteridine diphosphate and 4-aminobenzoate: step 1/2. Functionally, catalyzes the condensation of para-aminobenzoate (pABA) with 6-hydroxymethyl-7,8-dihydropterin diphosphate (DHPt-PP) to form 7,8-dihydropteroate (H2Pte), the immediate precursor of folate derivatives. The sequence is that of Dihydropteroate synthase (folP) from Staphylococcus aureus (strain MW2).